The sequence spans 494 residues: AAA-ATPase At2g18190 (494 aa).

Residues 13–29 (SSLFTAYASLTGFLMLF) form a helical membrane-spanning segment. 251 to 258 (GPPGTGKS) serves as a coordination point for ATP. Residues 459–470 (TCRKLDGDDKHN) show a composition bias toward basic and acidic residues. A disordered region spans residues 459-494 (TCRKLDGDDKHNVSSTNDLKKTKKKKKGGKGKAKGN). The segment covering 479-494 (KTKKKKKGGKGKAKGN) has biased composition (basic residues).

The protein belongs to the AAA ATPase family. BCS1 subfamily. Mg(2+) is required as a cofactor.

Its subcellular location is the membrane. It carries out the reaction ATP + H2O = ADP + phosphate + H(+). This chain is AAA-ATPase At2g18190, found in Arabidopsis thaliana (Mouse-ear cress).